The following is a 47-amino-acid chain: Delta-actitoxin-Aspp1a (47 aa).

3 disulfide bridges follow: C4/C44, C6/C34, and C27/C45.

The protein belongs to the sea anemone sodium channel inhibitory toxin family. Type I subfamily.

Its subcellular location is the secreted. The protein localises to the nematocyst. In terms of biological role, binds specifically to voltage-gated sodium channels (Nav) (site 3), thereby delaying their inactivation during signal transduction. Has a heart stimulation effect on isolated rat atria that is higher than that of Hk7a, Hk8a and Hk16a. The polypeptide is Delta-actitoxin-Aspp1a (Anthopleura sp. (strain 'Zhanjiang') (Sea anemone)).